The primary structure comprises 653 residues: Sodium-dependent phosphate transporter 2 (653 aa).

Residues 1-5 (MVLDE) are Extracellular-facing. A helical transmembrane segment spans residues 6 to 26 (YMWMVIVGFIIAFVLAFSVGA). Residues 27 to 46 (NDVANSFGTAVGSGVVTLRQ) are Cytoplasmic-facing. The chain crosses the membrane as a helical span at residues 47-67 (ACILASIFETIGSVLLGAKVG). Over 68-86 (ETIRKGIIDVNLYNNTVDL) the chain is Extracellular. Asparagine 81 carries an N-linked (GlcNAc...) asparagine glycan. A helical transmembrane segment spans residues 87 to 107 (LMAGEVSAMVGSAVWQLIASF). Residues 108-109 (LK) are Cytoplasmic-facing. A helical transmembrane segment spans residues 110-130 (LPVSGTHCIVGATIGFSLVAV). Residues 131 to 142 (GAHSVQWMQLVK) are Extracellular-facing. Residues 143-163 (IVASWFISPLLSGLMSGALFL) traverse the membrane as a helical segment. Topologically, residues 164–187 (MIKFFILNKEDPVPNGLKALPVFY) are cytoplasmic. Residues 188-208 (AATIGINVFSILFTGAPLLGL) form a helical membrane-spanning segment. Residues 209–217 (QTFPVWATA) lie on the Extracellular side of the membrane. Residues 218–238 (LLSVGIAIVFALVVWFFVCPW) form a helical membrane-spanning segment. The Cytoplasmic segment spans residues 239–483 (MKKKIASRLK…EDKEEKDKSQ (245 aa)). The interval 275-310 (LPGAKGNDESVLPLTSSSPDAAVSSESVSNGNTRVP) is disordered. Residues 290–303 (SSSPDAAVSSESVS) show a composition bias toward low complexity. Residues 484-504 (VHLLFHFLQILTACFGSFAHG) traverse the membrane as a helical segment. Topologically, residues 505-532 (GNDVSNAIGPLVALWLIYQQGGVMQEAS) are extracellular. A helical membrane pass occupies residues 533–553 (TPVWLLLYGGVGICAGLWVWG). Topologically, residues 554–572 (RRVIQTMGKDLTPITPSSG) are cytoplasmic. The chain crosses the membrane as a helical span at residues 573-587 (FTIELASAFTVVVAS). The Extracellular portion of the chain corresponds to 588-594 (NIGLPIS). A helical transmembrane segment spans residues 595–610 (TTHCKVGSVVAVGWIR). Over 611-622 (SRKAVDWRLFRN) the chain is Cytoplasmic. A helical transmembrane segment spans residues 623–643 (IFLAWFVTVPVAGLFSAGVMA). At 644–653 (ILQYGILPYV) the chain is on the extracellular side.

This sequence belongs to the inorganic phosphate transporter (PiT) (TC 2.A.20) family. In terms of assembly, homodimer.

The protein resides in the cell membrane. Its subcellular location is the apical cell membrane. It carries out the reaction 2 Na(+)(out) + phosphate(out) = 2 Na(+)(in) + phosphate(in). In terms of biological role, sodium-phosphate symporter which preferentially transports the monovalent form of phosphate with a stoichiometry of two sodium ions per phosphate ion. The chain is Sodium-dependent phosphate transporter 2 (slc20a2) from Xenopus laevis (African clawed frog).